The primary structure comprises 112 residues: Osmotically-inducible putative lipoprotein OsmE (112 aa).

The first 20 residues, 1 to 20, serve as a signal peptide directing secretion; the sequence is MNKNMAGILSAAAVLTMLAG. C21 carries the N-palmitoyl cysteine lipid modification. C21 is lipidated: S-diacylglycerol cysteine.

Its subcellular location is the cell inner membrane. The polypeptide is Osmotically-inducible putative lipoprotein OsmE (osmE) (Escherichia coli O157:H7).